A 128-amino-acid chain; its full sequence is 14.7 kDa protein (128 aa).

The segment at 65–94 (CFDCGAYLYDDHVCKRFTSRSNSDCLSVIH) adopts a C4-type zinc-finger fold.

In terms of biological role, may act as a regulatory factor during viral transcription. The protein is 14.7 kDa protein of Shallot virus X (ShVX).